We begin with the raw amino-acid sequence, 368 residues long: Alanine racemase (368 aa).

Lysine 40 (proton acceptor; specific for D-alanine) is an active-site residue. Lysine 40 is subject to N6-(pyridoxal phosphate)lysine. Residue arginine 134 coordinates substrate. Tyrosine 263 acts as the Proton acceptor; specific for L-alanine in catalysis. Position 310 (methionine 310) interacts with substrate.

This sequence belongs to the alanine racemase family. Pyridoxal 5'-phosphate is required as a cofactor.

It carries out the reaction L-alanine = D-alanine. It participates in amino-acid biosynthesis; D-alanine biosynthesis; D-alanine from L-alanine: step 1/1. Catalyzes the interconversion of L-alanine and D-alanine. May also act on other amino acids. The protein is Alanine racemase (alr) of Listeria innocua serovar 6a (strain ATCC BAA-680 / CLIP 11262).